Here is a 131-residue protein sequence, read N- to C-terminus: Small ribosomal subunit protein uS8 (131 aa).

The protein belongs to the universal ribosomal protein uS8 family. In terms of assembly, part of the 30S ribosomal subunit. Contacts proteins S5 and S12.

In terms of biological role, one of the primary rRNA binding proteins, it binds directly to 16S rRNA central domain where it helps coordinate assembly of the platform of the 30S subunit. The chain is Small ribosomal subunit protein uS8 from Dictyoglomus thermophilum (strain ATCC 35947 / DSM 3960 / H-6-12).